The chain runs to 135 residues: Histone H2B.4 (135 aa).

2 stretches are compositionally biased toward basic and acidic residues: residues 1–12 (MAPKAAEKKPVE) and 23–35 (EKKV…GGEK). A disordered region spans residues 1–43 (MAPKAAEKKPVEKTPAVKKPKAEKKVPTSKEGGEKKGKKKSKK). N6-acetyllysine occurs at positions 8 and 24. Residue K131 forms a Glycyl lysine isopeptide (Lys-Gly) (interchain with G-Cter in ubiquitin) linkage.

The protein belongs to the histone H2B family. In terms of assembly, the nucleosome is a histone octamer containing two molecules each of H2A, H2B, H3 and H4 assembled in one H3-H4 heterotetramer and two H2A-H2B heterodimers. The octamer wraps approximately 147 bp of DNA. Post-translationally, can be acetylated to form H2BK6ac and H2BK33ac. In terms of processing, monoubiquitinated to form H2BK143ub1; may give a specific tag for epigenetic transcriptional activation. In terms of tissue distribution, expressed preferentially in meristematic tissues.

Its subcellular location is the nucleus. It is found in the chromosome. In terms of biological role, core component of nucleosome. Nucleosomes wrap and compact DNA into chromatin, limiting DNA accessibility to the cellular machineries which require DNA as a template. Histones thereby play a central role in transcription regulation, DNA repair, DNA replication and chromosomal stability. DNA accessibility is regulated via a complex set of post-translational modifications of histones, also called histone code, and nucleosome remodeling. The chain is Histone H2B.4 (TH153) from Triticum aestivum (Wheat).